Here is a 252-residue protein sequence, read N- to C-terminus: Imidazole glycerol phosphate synthase subunit HisF (252 aa).

Residues D11 and D130 contribute to the active site.

Belongs to the HisA/HisF family. Heterodimer of HisH and HisF.

The protein localises to the cytoplasm. The catalysed reaction is 5-[(5-phospho-1-deoxy-D-ribulos-1-ylimino)methylamino]-1-(5-phospho-beta-D-ribosyl)imidazole-4-carboxamide + L-glutamine = D-erythro-1-(imidazol-4-yl)glycerol 3-phosphate + 5-amino-1-(5-phospho-beta-D-ribosyl)imidazole-4-carboxamide + L-glutamate + H(+). The protein operates within amino-acid biosynthesis; L-histidine biosynthesis; L-histidine from 5-phospho-alpha-D-ribose 1-diphosphate: step 5/9. Functionally, IGPS catalyzes the conversion of PRFAR and glutamine to IGP, AICAR and glutamate. The HisF subunit catalyzes the cyclization activity that produces IGP and AICAR from PRFAR using the ammonia provided by the HisH subunit. The polypeptide is Imidazole glycerol phosphate synthase subunit HisF (Geobacillus sp. (strain WCH70)).